The primary structure comprises 203 residues: Type III effector protein HopBF1 (203 aa).

Residues 1 to 23 (MFNVSNNVAPSRYQGPSSTSVTP) form a disordered region. ATP is bound by residues Ser40, Gln41, Lys42, Asp107, Ile109, and Asp114. Residue Asp155 is part of the active site. An ATP-binding site is contributed by Gln157.

It belongs to the HopBF1 family.

It is found in the secreted. The protein resides in the host cell. It carries out the reaction L-seryl-[protein] + ATP = O-phospho-L-seryl-[protein] + ADP + H(+). Effector protein that targets and inactivates the eukaryotic molecular chaperone HSP90 during infection. HopBF1 is recognized by HSP90 as a host client. As a result, HopBF1 phosphorylates HSP90, leading to the inactivation of the HSP90 ATPase activity and chaperone function. In vitro, can phosphorylate the recombinant yeast HSP82 (HSP90) and human HSP 90-beta on Ser-108. The polypeptide is Type III effector protein HopBF1 (Ewingella americana (strain ATCC 33852 / DSM 4580 / CCUG 14506 / JCM 5911 / LMG 7869 / NCTC 12157 / CDC 1468-78)).